A 168-amino-acid chain; its full sequence is Small ribosomal subunit protein uS5 (168 aa).

Residues 11–74 form the S5 DRBM domain; sequence YSEKVVKIDR…EAAKKHLVKI (64 aa).

The protein belongs to the universal ribosomal protein uS5 family. Part of the 30S ribosomal subunit. Contacts proteins S4 and S8.

In terms of biological role, with S4 and S12 plays an important role in translational accuracy. Located at the back of the 30S subunit body where it stabilizes the conformation of the head with respect to the body. This Leptospira borgpetersenii serovar Hardjo-bovis (strain JB197) protein is Small ribosomal subunit protein uS5.